The primary structure comprises 259 residues: Cytochrome c oxidase subunit 3 (259 aa).

7 consecutive transmembrane segments (helical) span residues 13 to 33 (PWPLTGSLGAMFLTVGLTSWF), 36 to 56 (HGFITMLLGLFLVLMTMFQWW), 80 to 100 (GMVLFITSEICFFFAFFWAYF), 125 to 145 (FQIPLLNTAILLASGVTVTWA), 154 to 174 (HAEATQSMVLTVILGGYFTLL), 195 to 215 (FFVATGFHGLHVIIGSVFLLI), and 237 to 257 (AWYWHFVDVVWLILYTCIYWW).

The protein belongs to the cytochrome c oxidase subunit 3 family. As to quaternary structure, component of the cytochrome c oxidase (complex IV, CIV), a multisubunit enzyme composed of a catalytic core of 3 subunits and several supernumerary subunits. The complex exists as a monomer or a dimer and forms supercomplexes (SCs) in the inner mitochondrial membrane with ubiquinol-cytochrome c oxidoreductase (cytochrome b-c1 complex, complex III, CIII).

It is found in the mitochondrion inner membrane. It catalyses the reaction 4 Fe(II)-[cytochrome c] + O2 + 8 H(+)(in) = 4 Fe(III)-[cytochrome c] + 2 H2O + 4 H(+)(out). Its function is as follows. Component of the cytochrome c oxidase, the last enzyme in the mitochondrial electron transport chain which drives oxidative phosphorylation. The respiratory chain contains 3 multisubunit complexes succinate dehydrogenase (complex II, CII), ubiquinol-cytochrome c oxidoreductase (cytochrome b-c1 complex, complex III, CIII) and cytochrome c oxidase (complex IV, CIV), that cooperate to transfer electrons derived from NADH and succinate to molecular oxygen, creating an electrochemical gradient over the inner membrane that drives transmembrane transport and the ATP synthase. Cytochrome c oxidase is the component of the respiratory chain that catalyzes the reduction of oxygen to water. Electrons originating from reduced cytochrome c in the intermembrane space (IMS) are transferred via the dinuclear copper A center (CU(A)) of subunit 2 and heme A of subunit 1 to the active site in subunit 1, a binuclear center (BNC) formed by heme A3 and copper B (CU(B)). The BNC reduces molecular oxygen to 2 water molecules using 4 electrons from cytochrome c in the IMS and 4 protons from the mitochondrial matrix. The chain is Cytochrome c oxidase subunit 3 (COIII) from Heterololigo bleekeri (Spear squid).